The sequence spans 663 residues: UvrABC system protein B (663 aa).

Residues 1–10 show a composition bias toward basic and acidic residues; the sequence is MIDKRDDKPF. The segment at 1 to 23 is disordered; the sequence is MIDKRDDKPFKLKSKYKPSGDQP. The Helicase ATP-binding domain occupies 31 to 271; that stretch reads DNIEGGEKAQ…EQSIAKIQAE (241 aa). 44-51 serves as a coordination point for ATP; sequence GATGTGKT. The Beta-hairpin motif lies at 97–120; it reads YYDYYQPEAYVPSSDTYIEKDSSV. The region spanning 435–601 is the Helicase C-terminal domain; sequence QIDDLLGEIN…TIKKDIRGLI (167 aa). Residues 627-662 enclose the UVR domain; it reads KEAINALQKQMQEAAELLDFELAAQMRDLILELKLM.

Belongs to the UvrB family. In terms of assembly, forms a heterotetramer with UvrA during the search for lesions. Interacts with UvrC in an incision complex.

It is found in the cytoplasm. Its function is as follows. The UvrABC repair system catalyzes the recognition and processing of DNA lesions. A damage recognition complex composed of 2 UvrA and 2 UvrB subunits scans DNA for abnormalities. Upon binding of the UvrA(2)B(2) complex to a putative damaged site, the DNA wraps around one UvrB monomer. DNA wrap is dependent on ATP binding by UvrB and probably causes local melting of the DNA helix, facilitating insertion of UvrB beta-hairpin between the DNA strands. Then UvrB probes one DNA strand for the presence of a lesion. If a lesion is found the UvrA subunits dissociate and the UvrB-DNA preincision complex is formed. This complex is subsequently bound by UvrC and the second UvrB is released. If no lesion is found, the DNA wraps around the other UvrB subunit that will check the other stand for damage. The polypeptide is UvrABC system protein B (Streptococcus pyogenes serotype M5 (strain Manfredo)).